Consider the following 365-residue polypeptide: NAC domain-containing protein 37 (365 aa).

The NAC domain occupies 9–158 (VPPGFRFHPT…GWVVCRAFKK (150 aa)). A DNA-binding region spans residues 109-164 (IGMRKTLVFYKGRAPNGKKSDWIMHEYRLESDENAPPQEEGWVVCRAFKKRATGQA).

Belongs to the plant vascular related NAC-domain protein family. As to quaternary structure, interacts with NAC030/VND7. In terms of tissue distribution, expressed in root metaxylem pole and in shoot pre-procambium and procambium. Present in root developing xylems. Specifically expressed in vessels but not in interfascicular fibers in stems.

It localises to the nucleus. Functionally, transcription activator that binds to the secondary wall NAC binding element (SNBE), 5'-(T/A)NN(C/T)(T/C/G)TNNNNNNNA(A/C)GN(A/C/T)(A/T)-3', in the promoter of target genes. Involved in xylem formation by promoting the expression of secondary wall-associated transcription factors and of genes involved in secondary wall biosynthesis and programmed cell death, genes driven by the secondary wall NAC binding element (SNBE). Triggers thickening of secondary walls. The sequence is that of NAC domain-containing protein 37 from Arabidopsis thaliana (Mouse-ear cress).